The following is a 489-amino-acid chain: Probable cytochrome P450 CYP44 (489 aa).

Residues 12 to 31 (VEKCPYSPTSSPNTPPRTFS) are disordered. The span at 16 to 29 (PYSPTSSPNTPPRT) shows a compositional bias: low complexity. Residue Cys-438 coordinates heme.

This sequence belongs to the cytochrome P450 family. It depends on heme as a cofactor.

Its function is as follows. Cytochromes P450 are a group of heme-thiolate monooxygenases. They oxidize a variety of structurally unrelated compounds, including steroids, fatty acids, and xenobiotics. The chain is Probable cytochrome P450 CYP44 (cyp-44A1) from Caenorhabditis elegans.